A 519-amino-acid chain; its full sequence is Protein nucleotidyltransferase YdiU (519 aa).

ATP contacts are provided by Gly-100, Gly-102, Arg-103, Lys-123, Asp-135, Gly-136, Arg-193, and Arg-200. Catalysis depends on Asp-270, which acts as the Proton acceptor. The Mg(2+) site is built by Asn-271 and Asp-280. Asp-280 is an ATP binding site.

Belongs to the SELO family. The cofactor is Mg(2+). Mn(2+) is required as a cofactor.

The catalysed reaction is L-seryl-[protein] + ATP = 3-O-(5'-adenylyl)-L-seryl-[protein] + diphosphate. It catalyses the reaction L-threonyl-[protein] + ATP = 3-O-(5'-adenylyl)-L-threonyl-[protein] + diphosphate. It carries out the reaction L-tyrosyl-[protein] + ATP = O-(5'-adenylyl)-L-tyrosyl-[protein] + diphosphate. The enzyme catalyses L-histidyl-[protein] + UTP = N(tele)-(5'-uridylyl)-L-histidyl-[protein] + diphosphate. The catalysed reaction is L-seryl-[protein] + UTP = O-(5'-uridylyl)-L-seryl-[protein] + diphosphate. It catalyses the reaction L-tyrosyl-[protein] + UTP = O-(5'-uridylyl)-L-tyrosyl-[protein] + diphosphate. In terms of biological role, nucleotidyltransferase involved in the post-translational modification of proteins. It can catalyze the addition of adenosine monophosphate (AMP) or uridine monophosphate (UMP) to a protein, resulting in modifications known as AMPylation and UMPylation. In Xylella fastidiosa (strain 9a5c), this protein is Protein nucleotidyltransferase YdiU.